Reading from the N-terminus, the 125-residue chain is Protein JAZ13 (125 aa).

An EAR motif is present at residues Leu6–Leu10. The disordered stretch occupies residues Lys99 to Phe125. The span at Thr112–Phe125 shows a compositional bias: low complexity.

Monomer. Lack of homodimerization, and very weak or no interaction with AFPH2/NINJA and other JAZ proteins. Interacts (via EAR motif) with TPL. Interacts (via jas motif) with MYC2. In terms of processing, phosphorylated at multiple serine residues.

In terms of biological role, non-TIFY functional repressor of jasmonate (JA)-mediated growth and defense responses. Intrinsically resistant to JA-induced turnover, probably due to the absence of the canonical degron that strongly interacts with COI1 in the presence of JA-Ile in the TIFY/JAZ proteins. This is Protein JAZ13 from Arabidopsis thaliana (Mouse-ear cress).